Here is a 440-residue protein sequence, read N- to C-terminus: Inner membrane metabolite transport protein YhjE (440 aa).

At 1-34 (MQATATTLDHEQEYTPINSRNKVLVASLIGTAIE) the chain is on the cytoplasmic side. A helical transmembrane segment spans residues 35-55 (FFDFYIYATAAVIVFPHIFFP). At 56–66 (QGDPTAATLQS) the chain is on the periplasmic side. Residues 67–87 (LATFAIAFVARPIGSAVFGHF) traverse the membrane as a helical segment. Over 88 to 108 (GDRVGRKATLVASLLTMGIST) the chain is Cytoplasmic. The next 2 membrane-spanning stretches (helical) occupy residues 109–129 (VVIGLLPGYATIGIFAPLLLA) and 130–150 (LARFGQGLGLGGEWGGAALLA). The Cytoplasmic segment spans residues 151-167 (TENAPPRKRALYGSFPQ). The helical transmembrane segment at 168-188 (LGAPIGFFFANGTFLLLSWLL) threads the bilayer. The Periplasmic portion of the chain corresponds to 189-192 (TDEQ). Residues 193-213 (FMSWGWRVPFIFSAVLVIIGL) traverse the membrane as a helical segment. The Cytoplasmic segment spans residues 214–248 (YVRVSLHESPVFEKVAKAKKQVKIPLGTLLTKHVR). A helical transmembrane segment spans residues 249–269 (VTVLGTFIMLATYTLFYIMTV). The Periplasmic portion of the chain corresponds to 270–289 (YSMTFSTAAAPVGLGLPRNE). A helical membrane pass occupies residues 290–310 (VLWMLMMAVIGFGVMVPVAGL). The Cytoplasmic portion of the chain corresponds to 311–320 (LADAFGRRKS). A helical membrane pass occupies residues 321-341 (MVIITTLIILFALFAFNPLLG). Residues 342–345 (SGNP) are Periplasmic-facing. A helical transmembrane segment spans residues 346–366 (ILVFAFLLLGLSLMGLTFGPM). The Cytoplasmic portion of the chain corresponds to 367-384 (GALLPELFPTEVRYTGAS). The helical transmembrane segment at 385–405 (FSYNVASILGASVAPYIAAWL) threads the bilayer. Residues 406-410 (QTNYG) are Periplasmic-facing. A helical transmembrane segment spans residues 411-431 (LGAVGLYLAAMAGLTLIALLL). Residues 432–440 (THETRHQSL) are Cytoplasmic-facing.

The protein belongs to the major facilitator superfamily. Metabolite:H+ Symporter (MHS) family (TC 2.A.1.6) family.

It is found in the cell inner membrane. This Escherichia coli (strain K12) protein is Inner membrane metabolite transport protein YhjE (yhjE).